Here is a 199-residue protein sequence, read N- to C-terminus: Photosystem I reaction center subunit XI (199 aa).

2 helical membrane passes run 108 to 128 (VTAGLLSAIGAVHIMTALLVL) and 165 to 185 (FWLGGCGGAVFAWLLVGTLHL).

It belongs to the PsaL family.

The protein localises to the cellular thylakoid membrane. The polypeptide is Photosystem I reaction center subunit XI (Prochlorococcus marinus (strain MIT 9215)).